A 482-amino-acid chain; its full sequence is ATP synthase subunit beta (482 aa).

161–168 (GGAGVGKT) contributes to the ATP binding site.

Belongs to the ATPase alpha/beta chains family. F-type ATPases have 2 components, CF(1) - the catalytic core - and CF(0) - the membrane proton channel. CF(1) has five subunits: alpha(3), beta(3), gamma(1), delta(1), epsilon(1). CF(0) has three main subunits: a(1), b(2) and c(9-12). The alpha and beta chains form an alternating ring which encloses part of the gamma chain. CF(1) is attached to CF(0) by a central stalk formed by the gamma and epsilon chains, while a peripheral stalk is formed by the delta and b chains.

The protein localises to the cell inner membrane. The enzyme catalyses ATP + H2O + 4 H(+)(in) = ADP + phosphate + 5 H(+)(out). Its function is as follows. Produces ATP from ADP in the presence of a proton gradient across the membrane. The catalytic sites are hosted primarily by the beta subunits. The sequence is that of ATP synthase subunit beta from Solibacter usitatus (strain Ellin6076).